The chain runs to 411 residues: Citrate synthase (411 aa).

Residues histidine 304 and aspartate 363 contribute to the active site.

Belongs to the citrate synthase family.

The catalysed reaction is oxaloacetate + acetyl-CoA + H2O = citrate + CoA + H(+). It functions in the pathway carbohydrate metabolism; tricarboxylic acid cycle; isocitrate from oxaloacetate: step 1/2. The polypeptide is Citrate synthase (gltA) (Rickettsia akari).